The following is a 642-amino-acid chain: Tigger transposable element derived 5 (642 aa).

Residues 1-54 (MYPASPPAGPALHPVPHRARLPQPRCLAEPPRSPAPGPGSTARPPPPPAPGPRP) are disordered. Residues 31–53 (PRSPAPGPGSTARPPPPPAPGPR) are compositionally biased toward pro residues. Residues 57 to 108 (AVKMTFRKAYSIKDKLQAIERVKGGERQASVCRDFGVPGGTLRGWLKDEPKL) enclose the HTH psq-type domain. 2 consecutive DNA-binding regions (H-T-H motif) follow at residues 84-104 (QASV…WLKD) and 155-188 (PVIQ…WQKR). Residues 122–195 (QRKKMRLANE…QKRHGISSQR (74 aa)) enclose the HTH CENPB-type domain. The tract at residues 202 to 238 (SPVAGPAPVKEEPAQSPGAVLVPDGAPATLPHSEGGY) is disordered. Residues 240–365 (DEQIYNANVT…CLQQKAVLLV (126 aa)) enclose the DDE-1 domain. Disordered stretches follow at residues 375–400 (TSMP…SPEE) and 548–581 (GCRE…TEQG).

Belongs to the tigger transposable element derived protein family.

Its subcellular location is the nucleus. This chain is Tigger transposable element derived 5 (Tigd5), found in Mus musculus (Mouse).